The sequence spans 899 residues: Alanine--tRNA ligase, chloroplastic/mitochondrial (899 aa).

Residues H581, H585, C683, and H687 each coordinate Zn(2+).

Belongs to the class-II aminoacyl-tRNA synthetase family. Monomer. Zn(2+) is required as a cofactor.

The protein resides in the plastid. It is found in the chloroplast. The protein localises to the mitochondrion. It catalyses the reaction tRNA(Ala) + L-alanine + ATP = L-alanyl-tRNA(Ala) + AMP + diphosphate. In terms of biological role, catalyzes the attachment of alanine to tRNA(Ala) in a two-step reaction: alanine is first activated by ATP to form Ala-AMP and then transferred to the acceptor end of tRNA(Ala). Also edits incorrectly charged tRNA(Ala) via its editing domain. This is Alanine--tRNA ligase, chloroplastic/mitochondrial from Micromonas pusilla (strain CCMP1545) (Picoplanktonic green alga).